A 271-amino-acid polypeptide reads, in one-letter code: MVNKMDIIPEITRKSITDLINNKERIDGRSLHEFRDISIETGVISKAEGSSRVKLGNTQIIVGVKPQIGEPFPDTPEMGVILTNSELLPMASPTFEPGPPDERSVELSRVVDRCIRESRMIDLEKLCIIEGSKVWMLFLDLHIIDYDGNLFDAAVLATVAALLDTRIPAAEVEDGEVVINREKMQPLPVNRKALMCTFAKIGNEIVLDPSLEEEDILTARISIGVTEEGSICAMQKGGEGPLTRDDVLKAVSIAVEKVPQLIEYLDKSMTP.

This sequence belongs to the RNase PH family. Rrp42 subfamily. In terms of assembly, component of the archaeal exosome complex. Forms a hexameric ring-like arrangement composed of 3 Rrp41-Rrp42 heterodimers. The hexameric ring associates with a trimer of Rrp4 and/or Csl4 subunits.

The protein localises to the cytoplasm. Functionally, non-catalytic component of the exosome, which is a complex involved in RNA degradation. Contributes to the structuring of the Rrp41 active site. The polypeptide is Exosome complex component Rrp42 (Methanothermobacter thermautotrophicus (strain ATCC 29096 / DSM 1053 / JCM 10044 / NBRC 100330 / Delta H) (Methanobacterium thermoautotrophicum)).